A 212-amino-acid polypeptide reads, in one-letter code: Penicillin-binding protein activator LpoB (212 aa).

Residues 1-19 form the signal peptide; that stretch reads MTKMHRYAAIAALAIFLSG. Residue Cys-20 is the site of N-palmitoyl cysteine attachment. A lipid anchor (S-diacylglycerol cysteine) is attached at Cys-20. A disordered region spans residues 28 to 73; that stretch reads PVEEVKPAPEQPAQPPQPPVVPSVPTIPQQPGPIEHEDQTGQPAPK. Over residues 36 to 49 the composition is skewed to pro residues; the sequence is PEQPAQPPQPPVVP.

Belongs to the LpoB family. In terms of assembly, interacts with PBP1b.

It is found in the cell outer membrane. Its function is as follows. Regulator of peptidoglycan synthesis that is essential for the function of penicillin-binding protein 1B (PBP1b). The polypeptide is Penicillin-binding protein activator LpoB (Salmonella typhimurium (strain LT2 / SGSC1412 / ATCC 700720)).